The following is a 466-amino-acid chain: tRNA modification GTPase MnmE (466 aa).

(6S)-5-formyl-5,6,7,8-tetrahydrofolate is bound by residues Arg25, Glu82, and Lys127. Residues 223–388 (GIKVVIAGQP…LRRQLLQIAG (166 aa)) form the TrmE-type G domain. Asn233 contributes to the K(+) binding site. Residues 233–238 (NAGKSS), 252–258 (TPIAGTT), 277–280 (DTAG), 346–349 (NKAD), and 369–371 (SAR) each bind GTP. Ser237 lines the Mg(2+) pocket. K(+) contacts are provided by Thr252, Ile254, and Thr257. Position 258 (Thr258) interacts with Mg(2+). Lys466 contributes to the (6S)-5-formyl-5,6,7,8-tetrahydrofolate binding site.

It belongs to the TRAFAC class TrmE-Era-EngA-EngB-Septin-like GTPase superfamily. TrmE GTPase family. Homodimer. Heterotetramer of two MnmE and two MnmG subunits. K(+) is required as a cofactor.

It is found in the cytoplasm. Functionally, exhibits a very high intrinsic GTPase hydrolysis rate. Involved in the addition of a carboxymethylaminomethyl (cmnm) group at the wobble position (U34) of certain tRNAs, forming tRNA-cmnm(5)s(2)U34. This is tRNA modification GTPase MnmE from Acidovorax sp. (strain JS42).